Consider the following 544-residue polypeptide: Homeobox protein B-H1 (544 aa).

Residues 53–70 (STTTMSSGGSTTTASGIG) are compositionally biased toward low complexity. 4 disordered regions span residues 53-73 (STTT…GKPN), 92-179 (YKQQ…PPTA), 236-308 (GGVG…AFTD), and 471-544 (AANP…QIQV). Over residues 95 to 105 (QQHHQQLHHHN) the composition is skewed to basic residues. Low complexity predominate over residues 106 to 131 (NNNNSGSSGGSSPAHSNNNNNINGDN). Residues 156-172 (THPHTHPHALMHPHGKL) are compositionally biased toward basic residues. Acidic residues predominate over residues 247-262 (DLDDSSDYHEENEDCD). Residues 266–282 (MDDHSVCSNGGKDDDGN) are compositionally biased toward basic and acidic residues. The segment covering 283-293 (SVKSGSTSDMS) has biased composition (polar residues). A DNA-binding region (homeobox) is located at residues 299-358 (QRKARTAFTDHQLQTLEKSFERQKYLSVQERQELAHKLDLSDCQVKTWYQNRRTKWKRQT). A compositionally biased stretch (pro residues) spans 476–485 (GPHPVAPPPS). Over residues 492–506 (PSGLVKPIPAHSASA) the composition is skewed to low complexity. Positions 507-516 (SPPPRPPSTP) are enriched in pro residues.

This sequence belongs to the Antp homeobox family. In terms of tissue distribution, B-H1 and B-H2 are abundant in the eye-antenna imaginal disk. Expressed in R1 and R6 cells throughout larval stage until 30 hours after puparium formation, at which time expression is seen in the anterior and posterior primary pigment cells. Coexpressed in embryonic glial cells, neurons of the CNS and PNS, most latitudinal anterior cells of the developing notum and the central circular region of the leg and antennal imaginal disk throughout larval development.

It localises to the nucleus. Functionally, B-H1 and B-H2 are regulated by members of the wg signaling pathway; wg and dpp. B-H1 and B-H2 are coexpressed and functionally required in R1 and R6 receptor cells and primary pigment cells for normal eye development. Coexpression is also required for the fate determination of external sensory organs, formation of notal microchaetae, formation of presutural macrochaetae, antennal development and for distal leg morphogenesis; segmentation and specification of tarsal segments 3-5. The protein is Homeobox protein B-H1 (B-H1) of Drosophila melanogaster (Fruit fly).